The sequence spans 246 residues: Probable S-methyl-5'-thioinosine phosphorylase (246 aa).

Residues threonine 10 and 52–53 each bind phosphate; that span reads RH. Methionine 185 contributes to the substrate binding site. Residue threonine 186 coordinates phosphate. 209-211 lines the substrate pocket; that stretch reads NPA.

This sequence belongs to the PNP/MTAP phosphorylase family. MTAP subfamily. As to quaternary structure, homotrimer.

The catalysed reaction is S-methyl-5'-thioinosine + phosphate = 5-(methylsulfanyl)-alpha-D-ribose 1-phosphate + hypoxanthine. It participates in purine metabolism; purine nucleoside salvage. In terms of biological role, catalyzes the reversible phosphorylation of S-methyl-5'-thioinosine (MTI) to hypoxanthine and 5-methylthioribose-1-phosphate. Involved in the breakdown of S-methyl-5'-thioadenosine (MTA), a major by-product of polyamine biosynthesis. Catabolism of (MTA) occurs via deamination to MTI and phosphorolysis to hypoxanthine. This chain is Probable S-methyl-5'-thioinosine phosphorylase, found in Pseudomonas syringae pv. tomato (strain ATCC BAA-871 / DC3000).